A 312-amino-acid chain; its full sequence is Isochorismatase (312 aa).

The region spanning 229-302 (VFTCENIRKQ…EWQKLLTTRS (74 aa)) is the Carrier domain. S263 carries the post-translational modification O-(pantetheine 4'-phosphoryl)serine.

This sequence belongs to the isochorismatase family.

The catalysed reaction is isochorismate + H2O = (2S,3S)-2,3-dihydroxy-2,3-dihydrobenzoate + pyruvate. The protein operates within siderophore biosynthesis; bacillibactin biosynthesis. The protein is Isochorismatase (dhbB) of Bacillus subtilis (strain 168).